The following is a 104-amino-acid chain: Large ribosomal subunit protein bL21 (104 aa).

The protein belongs to the bacterial ribosomal protein bL21 family. In terms of assembly, part of the 50S ribosomal subunit. Contacts protein L20.

Its function is as follows. This protein binds to 23S rRNA in the presence of protein L20. The sequence is that of Large ribosomal subunit protein bL21 from Pseudomonas entomophila (strain L48).